A 434-amino-acid chain; its full sequence is Serine hydroxymethyltransferase (434 aa).

Residues Leu133 and 137–139 contribute to the (6S)-5,6,7,8-tetrahydrofolate site; that span reads GHL. Lys242 is modified (N6-(pyridoxal phosphate)lysine). 366-368 contacts (6S)-5,6,7,8-tetrahydrofolate; it reads SPF.

Belongs to the SHMT family. In terms of assembly, homodimer. Pyridoxal 5'-phosphate is required as a cofactor.

Its subcellular location is the cytoplasm. The catalysed reaction is (6R)-5,10-methylene-5,6,7,8-tetrahydrofolate + glycine + H2O = (6S)-5,6,7,8-tetrahydrofolate + L-serine. It participates in one-carbon metabolism; tetrahydrofolate interconversion. Its pathway is amino-acid biosynthesis; glycine biosynthesis; glycine from L-serine: step 1/1. Its function is as follows. Catalyzes the reversible interconversion of serine and glycine with tetrahydrofolate (THF) serving as the one-carbon carrier. This reaction serves as the major source of one-carbon groups required for the biosynthesis of purines, thymidylate, methionine, and other important biomolecules. Also exhibits THF-independent aldolase activity toward beta-hydroxyamino acids, producing glycine and aldehydes, via a retro-aldol mechanism. The polypeptide is Serine hydroxymethyltransferase (Erythrobacter litoralis (strain HTCC2594)).